A 98-amino-acid chain; its full sequence is NADH-ubiquinone oxidoreductase chain 4L (98 aa).

3 helical membrane passes run 1–21 (MSMVYINIFLAFIMSLMGLLM), 29–49 (SLLCLEGMMLSLFIMMAVAIL), and 61–81 (IILLVFAACEAALGLSLLVMV).

It belongs to the complex I subunit 4L family. In terms of assembly, core subunit of respiratory chain NADH dehydrogenase (Complex I) which is composed of 45 different subunits.

The protein resides in the mitochondrion inner membrane. It catalyses the reaction a ubiquinone + NADH + 5 H(+)(in) = a ubiquinol + NAD(+) + 4 H(+)(out). In terms of biological role, core subunit of the mitochondrial membrane respiratory chain NADH dehydrogenase (Complex I) which catalyzes electron transfer from NADH through the respiratory chain, using ubiquinone as an electron acceptor. Part of the enzyme membrane arm which is embedded in the lipid bilayer and involved in proton translocation. This is NADH-ubiquinone oxidoreductase chain 4L (MT-ND4L) from Felis catus (Cat).